The following is a 342-amino-acid chain: MKFLDLCKVYIRSGGGGGGCVSFRREKFIEFGGPDGGDGGNGGSVWAEAVEGLNTLIDFRYQQHFFAKSGQPGMGSQRTGKSGEDIVLKVPVGTEIIDEDEETVIADLTEVGQRILLAQGGNGGWGNLRFKSSTNRAPARANPGQPGIDRTIWLRLKLIADAGLLGLPNAGKSTFLSATSNARPKIADYPFTTLVPNLGVVGVDGKEFVIADIPGLIEGASEGRGLGDQFLAHVERCSVLLHLVDGTSSTIVKDYRTIIGELEAYGGDLAGKPRITAMNKIDAMDPRQISDRRRALEKATGGKVFTISGVAGTGLMEVLRALWAEIDGARGDAVEEHVPWQP.

Residues 1–159 (MKFLDLCKVY…RTIWLRLKLI (159 aa)) enclose the Obg domain. The OBG-type G domain maps to 160-327 (ADAGLLGLPN…VLRALWAEID (168 aa)). GTP is bound by residues 166 to 173 (GLPNAGKS), 191 to 195 (FTTLV), 212 to 215 (DIPG), 279 to 282 (NKID), and 308 to 310 (SGV). The Mg(2+) site is built by serine 173 and threonine 193.

The protein belongs to the TRAFAC class OBG-HflX-like GTPase superfamily. OBG GTPase family. As to quaternary structure, monomer. The cofactor is Mg(2+).

It localises to the cytoplasm. Functionally, an essential GTPase which binds GTP, GDP and possibly (p)ppGpp with moderate affinity, with high nucleotide exchange rates and a fairly low GTP hydrolysis rate. Plays a role in control of the cell cycle, stress response, ribosome biogenesis and in those bacteria that undergo differentiation, in morphogenesis control. The chain is GTPase Obg from Cereibacter sphaeroides (strain ATCC 17025 / ATH 2.4.3) (Rhodobacter sphaeroides).